Reading from the N-terminus, the 519-residue chain is Tachykinin-like peptides receptor 99D (519 aa).

At 1–100 the chain is on the extracellular side; that stretch reads MENRSDFEAD…SFAFVVPWWR (100 aa). N-linked (GlcNAc...) asparagine glycosylation is found at Asn-3, Asn-19, Asn-22, and Asn-61. The chain crosses the membrane as a helical span at residues 101–123; the sequence is QVLWSILFGGMVIVATGGNLIVV. The Cytoplasmic portion of the chain corresponds to 124–134; the sequence is WIVMTTKRMRT. The helical transmembrane segment at 135–155 threads the bilayer; the sequence is VTNYFIVNLSIADAMVSSLNV. The Extracellular segment spans residues 156 to 175; the sequence is TFNYYYMLDSDWPFGEFYCK. Residues Cys-174 and Cys-254 are joined by a disulfide bond. A helical membrane pass occupies residues 176 to 197; that stretch reads LSQFIAMLSICASVFTLMAISI. Residues 198–217 lie on the Cytoplasmic side of the membrane; that stretch reads DRYVAIIRPLQPRMSKRCNL. A helical membrane pass occupies residues 218-238; sequence AIAAVIWLASTLISCPMMIIY. Topologically, residues 239 to 270 are extracellular; it reads RTEEVPVRGLSNRTVCYPEWPDGPTNHSTMES. A helical membrane pass occupies residues 271 to 292; that stretch reads LYNILIIILTYFLPIVSMTVTY. Topologically, residues 293 to 324 are cytoplasmic; that stretch reads SRVGIELWGSKTIGECTPRQVENVRSKRRVVK. Residues 325–346 form a helical membrane-spanning segment; sequence MMIVVVLIFAICWLPFHSYFII. The Extracellular segment spans residues 347–361; that stretch reads TSCYPAITEAPFIQE. Residues 362–384 form a helical membrane-spanning segment; it reads LYLAIYWLAMSNSMYNPIIYCWM. The Cytoplasmic segment spans residues 385-519; that stretch reads NSRFRYGFKM…STANTTQLLS (135 aa). Cys-399 carries the S-palmitoyl cysteine lipid modification. Positions 444 to 519 are disordered; it reads PSSPKSHRIS…STANTTQLLS (76 aa). Polar residues-rich tracts occupy residues 454 to 465 and 487 to 499; these read HSGTGRSATLRN and SYQQ…WSGP. A compositionally biased stretch (low complexity) spans 500 to 519; that stretch reads NSATAVTNSSSTANTTQLLS.

Belongs to the G-protein coupled receptor 1 family. In terms of tissue distribution, during late embryogenesis (stages 11-15), expressed in the brain and in a specific subset of neurons in each neuromere of the developing ventral ganglion. Expressed in the cortex of the adult brain, which contains the neuronal cell bodies.

It localises to the cell membrane. Receptor for tachykinin-like peptides. This is Tachykinin-like peptides receptor 99D (TkR99D) from Drosophila melanogaster (Fruit fly).